Consider the following 260-residue polypeptide: Thiazole synthase (260 aa).

Lys96 functions as the Schiff-base intermediate with DXP in the catalytic mechanism. 1-deoxy-D-xylulose 5-phosphate-binding positions include Gly157, 184–185, and 206–207; these read AG and NT.

Belongs to the ThiG family. In terms of assembly, homotetramer. Forms heterodimers with either ThiH or ThiS.

It localises to the cytoplasm. It carries out the reaction [ThiS sulfur-carrier protein]-C-terminal-Gly-aminoethanethioate + 2-iminoacetate + 1-deoxy-D-xylulose 5-phosphate = [ThiS sulfur-carrier protein]-C-terminal Gly-Gly + 2-[(2R,5Z)-2-carboxy-4-methylthiazol-5(2H)-ylidene]ethyl phosphate + 2 H2O + H(+). It participates in cofactor biosynthesis; thiamine diphosphate biosynthesis. In terms of biological role, catalyzes the rearrangement of 1-deoxy-D-xylulose 5-phosphate (DXP) to produce the thiazole phosphate moiety of thiamine. Sulfur is provided by the thiocarboxylate moiety of the carrier protein ThiS. In vitro, sulfur can be provided by H(2)S. In Bradyrhizobium sp. (strain ORS 278), this protein is Thiazole synthase.